The chain runs to 363 residues: Phosphate acyltransferase (363 aa).

The disordered stretch occupies residues 326 to 363 (ADSHPSKVNAGENAPPLASASNPSPEALPVGSLDRVEG). Positions 337–354 (ENAPPLASASNPSPEALP) are enriched in low complexity.

The protein belongs to the PlsX family. In terms of assembly, homodimer. Probably interacts with PlsY.

It is found in the cytoplasm. The enzyme catalyses a fatty acyl-[ACP] + phosphate = an acyl phosphate + holo-[ACP]. It participates in lipid metabolism; phospholipid metabolism. Functionally, catalyzes the reversible formation of acyl-phosphate (acyl-PO(4)) from acyl-[acyl-carrier-protein] (acyl-ACP). This enzyme utilizes acyl-ACP as fatty acyl donor, but not acyl-CoA. This Synechococcus sp. (strain JA-3-3Ab) (Cyanobacteria bacterium Yellowstone A-Prime) protein is Phosphate acyltransferase.